Reading from the N-terminus, the 216-residue chain is Protein-L-isoaspartate O-methyltransferase (216 aa).

Ser-60 is an active-site residue.

This sequence belongs to the methyltransferase superfamily. L-isoaspartyl/D-aspartyl protein methyltransferase family.

Its subcellular location is the cytoplasm. The catalysed reaction is [protein]-L-isoaspartate + S-adenosyl-L-methionine = [protein]-L-isoaspartate alpha-methyl ester + S-adenosyl-L-homocysteine. In terms of biological role, catalyzes the methyl esterification of L-isoaspartyl residues in peptides and proteins that result from spontaneous decomposition of normal L-aspartyl and L-asparaginyl residues. It plays a role in the repair and/or degradation of damaged proteins. This is Protein-L-isoaspartate O-methyltransferase from Methanococcus aeolicus (strain ATCC BAA-1280 / DSM 17508 / OCM 812 / Nankai-3).